The following is a 299-amino-acid chain: Phosphatidylcholine-sterol acyltransferase (299 aa).

2 N-linked (GlcNAc...) asparagine glycosylation sites follow: asparagine 28 and asparagine 184. A disulfide bond links cysteine 225 and cysteine 268. Aspartate 257 serves as the catalytic Charge relay system. An N-linked (GlcNAc...) asparagine glycan is attached at asparagine 285. Catalysis depends on histidine 289, which acts as the Charge relay system. Asparagine 296 carries an N-linked (GlcNAc...) asparagine glycan.

Belongs to the AB hydrolase superfamily. Lipase family.

Its subcellular location is the secreted. The enzyme catalyses a sterol + a 1,2-diacyl-sn-glycero-3-phosphocholine = a sterol ester + a 1-acyl-sn-glycero-3-phosphocholine. With respect to regulation, APOA1 is the most potent activator in plasma. Also activated by APOE, APOC1 and APOA4. In terms of biological role, central enzyme in the extracellular metabolism of plasma lipoproteins. Synthesized mainly in the liver and secreted into plasma where it converts cholesterol and phosphatidylcholines (lecithins) to cholesteryl esters and lysophosphatidylcholines on the surface of high and low density lipoproteins (HDLs and LDLs). The cholesterol ester is then transported back to the liver. Has a preference for plasma 16:0-18:2 or 18:O-18:2 phosphatidylcholines. Also produced in the brain by primary astrocytes, and esterifies free cholesterol on nascent APOE-containing lipoproteins secreted from glia and influences cerebral spinal fluid (CSF) APOE- and APOA1 levels. Together with APOE and the cholesterol transporter ABCA1, plays a key role in the maturation of glial-derived, nascent lipoproteins. Required for remodeling high-density lipoprotein particles into their spherical forms. This Micromys minutus (European harvest mouse) protein is Phosphatidylcholine-sterol acyltransferase (LCAT).